The chain runs to 329 residues: Aurora kinase B (329 aa).

Positions 1 to 14 (MTLSRAKHANRNHL) are enriched in basic residues. The segment at 1-21 (MTLSRAKHANRNHLPHLLAKV) is disordered. One can recognise a Protein kinase domain in the interval 53–305 (FEMGAHLGRG…LVDVMTHYWV (253 aa)). ATP is bound by residues 59 to 67 (LGRGKFGRV) and Lys-82. Asp-178 serves as the catalytic Proton acceptor.

The protein belongs to the protein kinase superfamily. Ser/Thr protein kinase family. Aurora subfamily. Interacts with Incenp and Cdc37. Mg(2+) serves as cofactor.

The protein resides in the chromosome. Its subcellular location is the cytoplasm. It localises to the cytoskeleton. The protein localises to the midbody. It carries out the reaction L-seryl-[protein] + ATP = O-phospho-L-seryl-[protein] + ADP + H(+). The catalysed reaction is L-threonyl-[protein] + ATP = O-phospho-L-threonyl-[protein] + ADP + H(+). In terms of biological role, serine/threonine-protein kinase that mediates both meiotic and mitotic chromosome segregation. Required for histone H3 'Ser-10' phosphorylation. Phosphorylates mei-S332 within residues 124-126 and stabilizes its association with centromeres during meiosis. May regulate the function of the ESCRT-III complex core component shrb during abscission of germline cells in oogenesis. The sequence is that of Aurora kinase B from Drosophila melanogaster (Fruit fly).